Here is a 295-residue protein sequence, read N- to C-terminus: Proline-rich proteoglycan 2 (295 aa).

The signal sequence occupies residues 1–16 (MLVVLLTAALLVLSSA). Residues 16 to 295 (AQGVDEEVVY…QSSFLWSFSA (280 aa)) form a disordered region. Low complexity predominate over residues 26–41 (EDSSQQLELEQQSQGH). The segment covering 48–58 (PPPGGLPPRPP) has biased composition (pro residues). Over residues 62–78 (ENGDGDDNDDGDDDGSG) the composition is skewed to acidic residues. Pro residues-rich tracts occupy residues 100-187 (PPPA…PPGG) and 194-278 (QGPP…PQGP).

Contains glycosaminoglycans of chondroitin-sulfate and heparan types.

It is found in the secreted. The polypeptide is Proline-rich proteoglycan 2 (Prpg2) (Rattus norvegicus (Rat)).